A 30-amino-acid chain; its full sequence is Cytochrome c3, 50 kDa (30 aa).

As to quaternary structure, monomer. Binds 4 heme groups per subunit.

It localises to the periplasm. In terms of biological role, participates in sulfate respiration coupled with phosphorylation by transferring electrons from the enzyme dehydrogenase to ferredoxin. This chain is Cytochrome c3, 50 kDa, found in Desulfuromonas acetoxidans (Chloropseudomonas ethylica).